Reading from the N-terminus, the 517-residue chain is Tyrosine 3-monooxygenase (517 aa).

The residue at position 33 (serine 33) is a Phosphoserine; by PKA. Fe cation-binding residues include histidine 345, histidine 350, and glutamate 390.

This sequence belongs to the biopterin-dependent aromatic amino acid hydroxylase family. Fe(2+) is required as a cofactor.

It localises to the cytoplasm. It is found in the perinuclear region. The protein localises to the cell projection. The protein resides in the axon. The enzyme catalyses (6R)-L-erythro-5,6,7,8-tetrahydrobiopterin + L-tyrosine + O2 = (4aS,6R)-4a-hydroxy-L-erythro-5,6,7,8-tetrahydrobiopterin + L-dopa. It participates in catecholamine biosynthesis; dopamine biosynthesis; dopamine from L-tyrosine: step 1/2. Phosphorylation leads to an increase in the catalytic activity. Involved in the synthesis of catecholamines, such as dopamine. Has a role in serotonin signaling. Required for normal explorative and foraging behavior. This chain is Tyrosine 3-monooxygenase (cat-2), found in Caenorhabditis briggsae.